A 489-amino-acid chain; its full sequence is Beta-galactosidase (489 aa).

N6-methyllysine; partial is present on Lys-116. Lys-135 is modified (N6-methyllysine). The Proton donor role is filled by Glu-206. Lys-273 and Lys-311 each carry N6-methyllysine; partial. Residue Lys-332 is modified to N6-methyllysine. The Nucleophile role is filled by Glu-387.

Homotetramer.

The catalysed reaction is Hydrolysis of terminal non-reducing beta-D-galactose residues in beta-D-galactosides.. The protein is Beta-galactosidase (lacS) of Saccharolobus solfataricus (strain ATCC 35092 / DSM 1617 / JCM 11322 / P2) (Sulfolobus solfataricus).